We begin with the raw amino-acid sequence, 208 residues long: 3-demethoxyubiquinol 3-hydroxylase (208 aa).

Fe cation-binding residues include E57, E87, H90, E139, E171, and H174.

Belongs to the COQ7 family. Requires Fe cation as cofactor.

The protein resides in the cell membrane. It catalyses the reaction a 5-methoxy-2-methyl-3-(all-trans-polyprenyl)benzene-1,4-diol + AH2 + O2 = a 3-demethylubiquinol + A + H2O. Its pathway is cofactor biosynthesis; ubiquinone biosynthesis. Functionally, catalyzes the hydroxylation of 2-nonaprenyl-3-methyl-6-methoxy-1,4-benzoquinol during ubiquinone biosynthesis. The protein is 3-demethoxyubiquinol 3-hydroxylase of Janthinobacterium sp. (strain Marseille) (Minibacterium massiliensis).